A 394-amino-acid polypeptide reads, in one-letter code: 1-deoxy-D-xylulose 5-phosphate reductoisomerase (394 aa).

Residues Thr14, Gly15, Ser16, Ile17, Gly40, and Asn128 each coordinate NADPH. Lys129 lines the 1-deoxy-D-xylulose 5-phosphate pocket. Glu130 is an NADPH binding site. Asp154 lines the Mn(2+) pocket. 1-deoxy-D-xylulose 5-phosphate contacts are provided by Ser155, Glu156, Ser180, and His203. Glu156 is a Mn(2+) binding site. NADPH is bound at residue Gly209. Residues Ser216, Asn221, Lys222, and Glu225 each coordinate 1-deoxy-D-xylulose 5-phosphate. Glu225 serves as a coordination point for Mn(2+).

It belongs to the DXR family. Requires Mg(2+) as cofactor. The cofactor is Mn(2+).

The enzyme catalyses 2-C-methyl-D-erythritol 4-phosphate + NADP(+) = 1-deoxy-D-xylulose 5-phosphate + NADPH + H(+). It participates in isoprenoid biosynthesis; isopentenyl diphosphate biosynthesis via DXP pathway; isopentenyl diphosphate from 1-deoxy-D-xylulose 5-phosphate: step 1/6. In terms of biological role, catalyzes the NADPH-dependent rearrangement and reduction of 1-deoxy-D-xylulose-5-phosphate (DXP) to 2-C-methyl-D-erythritol 4-phosphate (MEP). The chain is 1-deoxy-D-xylulose 5-phosphate reductoisomerase from Xylella fastidiosa (strain M12).